A 1623-amino-acid polypeptide reads, in one-letter code: MADGEHTLPADEELFEQPPPQQQQPEIAEPIVMAQEPIQGVSEDPQASEATHEAPDNYPVDHQMENQEFYHEPQIPEPQQIPQIPVFQPAAYNPPNYVAPQQRANNFGEPAAADARPLTEQEQLAAERPTEDTVWIDSDDDTDVEEAILRANFWLPYSDHNYDPPDPADRIILPTEGPFPCIAGLDEDCNIVKQWMPEDAVGPGSPGTQYRRNQQAGGGLPSTSVASQQQQLPVRHNIQNRPMVAAQPFSIGGNQVEYGGMDSRMQQRGVVRDGPQYRVMNDFGNGLPMRGLLPPRNSPAANAINRAREQQQQMYHQAGARGSLQQRAAPAPADPTPGSYQHIVNAVPGGGANPMRRVPPQARPGMIGGAANNNRARPTHVTRPMDTQEFEHPVAPAAAPPHRVVDVAPHRMTPEQRQELQQMNRQRAAPQFPAAAAQRSAEVIVIQQRPGASSRAPRPSMAQEDLLRSPTRRLSERVPQEHQTPVLEPRRFQVKVTDTYSTPIPKASDQLPAQLTEEDPPEESAAAAAPEDVPDAAPEDPPKVILKPTPPHRMTQEEKNAHFARLTTDKEKPTSSTSILPQDAAPPHVPPPPPPLVLRPHHQDETLAMVQSVFESKPRQPDTPKDKETISKIADLLRFSADEFTGQSGSSAAARQRTVSGSAARAQTYQMHHQQQQHHHQMPMDQRKRPSSGRYDALMGAMPLQQQPPPPPSQFQHTDSIAHRPRGRPKGTRHPSVAVQPQRSGGARTLPPRAQTVAMSARNGANAKNSDSESEGIDEAAEESWTMRCHCGMDHGDGDTIECEGCKTWQHMACMGLTLKSNTSKYKCEMCLPRRLPVSKAEAAREQERILNRLRAAARKQKRKSEPVEQKQKSSQPSTSRKSAPMALQQPAEPRVAQLNDYSKQASALLFGMEQTAGADTLLAESRLHKKARRMFVEEAVEALVTTDLVQIRQVILEVNGHVSMSSEVKRQPGGGNCIFMYDGLMKGTAGEDMGDGQELVCIDTKRKGNDTKFTRRSCVPNCVLKHVLGSNATLGIMIVATKDITRNTEVTLPFDADWRESEVELECAEHMKELQACPFESERRRFAAERHRAMDHKKQEAEEARRADEERRRLEEEVRRERAAKTKQMDEAEKARLEAEKAAEKEKKAKERKKMEASAAAAPESTNSITAREERRIQQAEEMFRRQEEEGKRKEARRRSKSVTPGVLEAAGTAAREDAPEASIPVPAPSPPASRRSVSRTTQPSTSSFATPTEPPAKNKRMRSVVPPKSEPASSAKRVRATTVATPKATTANDSRKRTASATGKTPVAKRSKNVAPTSFALALIEKELREQARNSTVLEMILPDYIMNEERSGLLAGQSPDFSEVRAQIEEENRMKERSRKREAKKKAVEKEKKEHRKEPKKTNEPGPAPKSEKAVEKAVEKVEKKPKSPQKPPAKPTAQNPPLKKTEEVDGIEREASESSSKESSVAPEEKKNPKKITFAEYNSRRSQKREAGECSTPPAVTRRGFIPSTEGEDLVNVELSAIPLDDHPSSSNTAPTTTIAPSVGGAPKPTSVVVKSPSTRSRTRGAASESADDAPAEHSMSLQDRVFSMFGSTVDAPAPPPPPASAETNSRRSRSTRWN.

Disordered regions lie at residues 1-102, 112-131, 198-227, 448-600, and 645-781; these read MADG…APQQ, AADARPLTEQEQLAAERPTE, EDAVGPGSPGTQYRRNQQAGGGLPSTSVAS, QRPG…VLRP, and TGQS…DEAA. The segment covering 62-71 has biased composition (basic and acidic residues); the sequence is HQMENQEFYH. Residues 77–100 show a composition bias toward low complexity; sequence EPQQIPQIPVFQPAAYNPPNYVAP. Positions 206-227 are enriched in polar residues; it reads PGTQYRRNQQAGGGLPSTSVAS. Positions 554 to 573 are enriched in basic and acidic residues; sequence MTQEEKNAHFARLTTDKEKP. Over residues 587–597 the composition is skewed to pro residues; it reads PHVPPPPPPLV. The span at 645–669 shows a compositional bias: polar residues; that stretch reads TGQSGSSAAARQRTVSGSAARAQTY. A compositionally biased stretch (basic residues) spans 723-733; that stretch reads HRPRGRPKGTR. The span at 772-781 shows a compositional bias: acidic residues; the sequence is SESEGIDEAA. A PHD-type zinc finger spans residues 786 to 834; the sequence is TMRCHCGMDHGDGDTIECEGCKTWQHMACMGLTLKSNTSKYKCEMCLPR. Positions 857-895 are disordered; it reads AARKQKRKSEPVEQKQKSSQPSTSRKSAPMALQQPAEPR. The span at 873-882 shows a compositional bias: polar residues; sequence KSSQPSTSRK. The 92-residue stretch at 965–1056 folds into the SET domain; the sequence is MSSEVKRQPG…RNTEVTLPFD (92 aa). Basic and acidic residues-rich tracts occupy residues 1089–1157 and 1172–1194; these read AERH…KKME and AREERRIQQAEEMFRRQEEEGKR. Disordered stretches follow at residues 1089 to 1318 and 1356 to 1623; these read AERH…NVAP and LLAG…TRWN. Residues 1093–1201 are a coiled coil; that stretch reads RAMDHKKQEA…GKRKEARRRS (109 aa). Residues 1242–1252 show a composition bias toward polar residues; the sequence is TTQPSTSSFAT. Over residues 1282-1293 the composition is skewed to low complexity; that stretch reads ATTVATPKATTA. Residues 1364-1401 are a coiled coil; it reads FSEVRAQIEEENRMKERSRKREAKKKAVEKEKKEHRKE. 4 stretches are compositionally biased toward basic and acidic residues: residues 1365 to 1378, 1388 to 1406, 1413 to 1429, and 1447 to 1464; these read SEVRAQIEEENRMK, KKAVEKEKKEHRKEPKKTN, KSEKAVEKAVEKVEKKP, and KKTEEVDGIEREASESSS. Over residues 1533–1544 the composition is skewed to polar residues; that stretch reads SSSNTAPTTTIA.

It belongs to the class V-like SAM-binding methyltransferase superfamily. Predominantly expressed in the germline (at protein level).

It localises to the nucleus. The catalysed reaction is L-lysyl-[histone] + S-adenosyl-L-methionine = N(6)-methyl-L-lysyl-[histone] + S-adenosyl-L-homocysteine + H(+). Histone methyltransferase. Might play a role in transcriptional regulation. Together with set-26, negatively regulates lifespan in a germline-independent, partially daf-16-dependent fashion. Together with set-26, plays a role in germline development and maintenance and might play a role in the restriction of the trimethylation mark on histone H3 'Lys-4'(H3K4me3) to target genes specifically in the germline. This Caenorhabditis elegans protein is Histone-lysine N-methyltransferase set-9.